The primary structure comprises 847 residues: Putative disease resistance RPP13-like protein 2 (847 aa).

Residues 26–42 (GVKDDLEELKTELTCIQ) are a coiled coil. The NB-ARC domain occupies 142–446 (STSRVREVRR…AEGFIQEDEE (305 aa)). Residue 191 to 198 (GMEGLGKT) coordinates ATP. LRR repeat units follow at residues 587-610 (LVHL…ISNL), 612-634 (FLQT…NLTS), 703-726 (LKNL…TVRF), 749-774 (FPSL…KLQR), and 807-830 (IKRL…NLDN).

This sequence belongs to the disease resistance NB-LRR family. RPP13 subfamily.

Its function is as follows. Potential disease resistance protein. In Arabidopsis thaliana (Mouse-ear cress), this protein is Putative disease resistance RPP13-like protein 2 (RPP13L2).